The primary structure comprises 171 residues: Protein-export protein SecB (171 aa).

This sequence belongs to the SecB family. As to quaternary structure, homotetramer, a dimer of dimers. One homotetramer interacts with 1 SecA dimer.

The protein resides in the cytoplasm. Functionally, one of the proteins required for the normal export of preproteins out of the cell cytoplasm. It is a molecular chaperone that binds to a subset of precursor proteins, maintaining them in a translocation-competent state. It also specifically binds to its receptor SecA. This Granulibacter bethesdensis (strain ATCC BAA-1260 / CGDNIH1) protein is Protein-export protein SecB.